Reading from the N-terminus, the 1149-residue chain is DNA polymerase (1149 aa).

Residues 1 to 28 (MSLVQSHGTSGLFTEPPNSINQQESSGP) show a composition bias toward polar residues. The interval 1-49 (MSLVQSHGTSGLFTEPPNSINQQESSGPSLPAQDATQASASSARAGATP) is disordered. The segment covering 31-49 (PAQDATQASASSARAGATP) has biased composition (low complexity).

The protein belongs to the DNA polymerase type-B family. As to quaternary structure, heterodimer with the terminal protein; this heterodimer binds to bp 9 to 18 of the genome. Forms a complex with viral pTP, DBP and hosts NFIA and POU2F1/OCT1 for initiation of replication.

It is found in the host nucleus. It carries out the reaction DNA(n) + a 2'-deoxyribonucleoside 5'-triphosphate = DNA(n+1) + diphosphate. In terms of biological role, eukaryotic-type DNA polymerase involved in viral genomic replication. DNA synthesis is protein primed, and acts in a strand displacement replication. Assembles in complex with viral pTP, DBP, host NFIA and host POU2F1/OCT1 on viral origin of replication. The polymerase covalently transfers dCMP onto pTP, thereby initiating complementary strand synthesis. This Canine adenovirus serotype 1 (strain CLL) (CAdV-1) protein is DNA polymerase.